A 147-amino-acid polypeptide reads, in one-letter code: Hordoindoline-B2 (147 aa).

An N-terminal signal peptide occupies residues M1–A19. Residues Q20–N28 constitute a propeptide that is removed on maturation.

Five disulfide bonds are present. Found in endosperm and aleurone layer of developing kernels, but not in the embryo.

It localises to the membrane. Its subcellular location is the secreted. It is found in the extracellular space. In terms of biological role, acts as a membranotoxin, probably through its antibacterial and antifungal activities, contributing to the defense mechanism of the plant against predators. Forms monovalent cation-selective ion channels in membranes. Contributes to grain texture and hardness. The protein is Hordoindoline-B2 (HINB-2) of Hordeum vulgare (Barley).